Consider the following 190-residue polypeptide: Probable chorismate pyruvate-lyase (190 aa).

Residues Arg74, Leu112, and Glu173 each coordinate substrate.

It belongs to the UbiC family.

It localises to the cytoplasm. It carries out the reaction chorismate = 4-hydroxybenzoate + pyruvate. It participates in cofactor biosynthesis; ubiquinone biosynthesis. Removes the pyruvyl group from chorismate, with concomitant aromatization of the ring, to provide 4-hydroxybenzoate (4HB) for the ubiquinone pathway. The sequence is that of Probable chorismate pyruvate-lyase from Bordetella bronchiseptica (strain ATCC BAA-588 / NCTC 13252 / RB50) (Alcaligenes bronchisepticus).